Reading from the N-terminus, the 671-residue chain is Sodium, potassium, lithium and rubidium/H(+) antiporter (671 aa).

A run of 11 helical transmembrane segments spans residues 7-29 (VLVL…FIPV), 46-66 (GLHI…PLLF), 83-103 (PILL…GYTI), 110-130 (IPLP…VVAV), 156-176 (ASGL…AFSI), 182-202 (SFVL…FFII), 228-248 (FVIY…VVAG), 276-296 (IILF…IPDV), 315-335 (ILII…LFWA), 364-384 (GAVT…GSPF), and 389-409 (LIIF…SVLL).

This sequence belongs to the monovalent cation:proton antiporter 1 (CPA1) transporter (TC 2.A.36) family. Nhak (TC 2.A.36.3.2) subfamily.

The protein resides in the cell membrane. In terms of biological role, transporter involved in the efflux of sodium, potassium, lithium and rubidium. In Bacillus pumilus (strain SAFR-032), this protein is Sodium, potassium, lithium and rubidium/H(+) antiporter (nhaK).